A 441-amino-acid chain; its full sequence is Ribulose bisphosphate carboxylase large chain (441 aa).

Residues Asn-89 and Thr-139 each contribute to the substrate site. Residue Lys-141 is the Proton acceptor of the active site. Position 143 (Lys-143) interacts with substrate. Mg(2+) contacts are provided by Lys-167, Asp-169, and Glu-170. Lys-167 carries the N6-carboxylysine modification. His-260 (proton acceptor) is an active-site residue. 3 residues coordinate substrate: Arg-261, His-293, and Ser-345.

Belongs to the RuBisCO large chain family. Type I subfamily. In terms of assembly, heterohexadecamer of 8 large chains and 8 small chains; disulfide-linked. The disulfide link is formed within the large subunit homodimers. Requires Mg(2+) as cofactor. In terms of processing, the disulfide bond which can form in the large chain dimeric partners within the hexadecamer appears to be associated with oxidative stress and protein turnover.

It localises to the plastid. Its subcellular location is the chloroplast. It carries out the reaction 2 (2R)-3-phosphoglycerate + 2 H(+) = D-ribulose 1,5-bisphosphate + CO2 + H2O. It catalyses the reaction D-ribulose 1,5-bisphosphate + O2 = 2-phosphoglycolate + (2R)-3-phosphoglycerate + 2 H(+). RuBisCO catalyzes two reactions: the carboxylation of D-ribulose 1,5-bisphosphate, the primary event in carbon dioxide fixation, as well as the oxidative fragmentation of the pentose substrate in the photorespiration process. Both reactions occur simultaneously and in competition at the same active site. This is Ribulose bisphosphate carboxylase large chain from Coriandrum sativum (Coriander).